We begin with the raw amino-acid sequence, 782 residues long: Transcription factor SOX-30 (782 aa).

Disordered stretches follow at residues 1–37 (MERA…AQPV), 95–117 (LPPG…AAAA), and 139–226 (PPQS…DALK). Pro residues-rich tracts occupy residues 7-35 (EPPP…PPAQ) and 97-106 (PGGPGVPPAP). Over residues 203–226 (LDGRRSDEKKAKLEAEEAPRDALK) the composition is skewed to basic and acidic residues. The HMG box DNA-binding region spans 366–434 (VKRPMNAFMV…KHREEFPGWV (69 aa)). 3 disordered regions span residues 501 to 604 (PTPA…STCP), 704 to 724 (YPDE…DGPP), and 756 to 782 (ASAP…LRNL). Over residues 512–522 (TLFQPSVSSTG) the composition is skewed to polar residues. Residues 525-538 (AVPPPSLTPRPSLP) show a composition bias toward pro residues. Over residues 555–574 (SGSSRSVKRSTPGSLESTTR) the composition is skewed to polar residues. Basic and acidic residues predominate over residues 704–718 (YPDEHTHSEDSRSCE).

As to quaternary structure, interacts with CTNNB1, competitively inhibiting CTNNB1-TCF7L2/TCF4 interaction. Expressed in the lung (at protein level). Expressed in testes (at protein level). Expressed in preleptotene spermatocytes, round spermatids, and elongated spermatids in the testis (at protein level). Expressed in pachytene spermatocytes during stages 3 to 8 of spermatogenesis (at protein level). Increased expression in diplotene spermatocytes at stage 9-11 and in metaphase spermatocytes or secondary spermatocytes at stage 12. Expressed in ovaries.

Its subcellular location is the nucleus. It localises to the cytoplasm. Functionally, acts both as a transcriptional activator and a repressor. Binds to the DNA sequence 5'-ACAAT-3' and shows a preference for guanine residues surrounding this core motif. Binds to its own promoter and activates its own transcription. Required to activate the expression of postmeiotic genes involved in spermiogenesis. Binds to the promoter region of CTNNB1 and represses its transcription which leads to inhibition of Wnt signaling. Also inhibits Wnt signaling by binding to the CTNNB1 protein, preventing interaction of CTNNB1 with TCF7L2/TCF4. The sequence is that of Transcription factor SOX-30 (Sox30) from Mus musculus (Mouse).